We begin with the raw amino-acid sequence, 927 residues long: Translation initiation factor IF-2 (927 aa).

Residues 27-337 (LGLPVKSHAS…GAPKPVTERK (311 aa)) form a disordered region. Over residues 49 to 69 (SFSSSKTKAPTNSVQTNQGVK) the composition is skewed to polar residues. 2 stretches are compositionally biased toward basic and acidic residues: residues 70 to 86 (TESK…DDKP) and 101 to 138 (FKAE…DRRH). The segment covering 146–159 (GNRNDNRQGQQNNR) has biased composition (low complexity). Composition is skewed to basic and acidic residues over residues 160-171 (NKNDGRYADHKQ), 202-226 (YSRH…EQEL), and 234-257 (AQEE…KEIV). Over residues 300–316 (NWNNQNQVRNQRNSNWN) the composition is skewed to low complexity. A tr-type G domain is found at 428 to 597 (ERPPVVTIMG…LLVAEMEELK (170 aa)). The segment at 437–444 (GHVDHGKT) is G1. 437–444 (GHVDHGKT) contributes to the GTP binding site. The tract at residues 462 to 466 (GITQH) is G2. The tract at residues 483–486 (DTPG) is G3. GTP is bound by residues 483–487 (DTPGH) and 537–540 (NKID). The G4 stretch occupies residues 537–540 (NKID). The interval 573–575 (SAK) is G5.

This sequence belongs to the TRAFAC class translation factor GTPase superfamily. Classic translation factor GTPase family. IF-2 subfamily.

It is found in the cytoplasm. One of the essential components for the initiation of protein synthesis. Protects formylmethionyl-tRNA from spontaneous hydrolysis and promotes its binding to the 30S ribosomal subunits. Also involved in the hydrolysis of GTP during the formation of the 70S ribosomal complex. This chain is Translation initiation factor IF-2, found in Streptococcus agalactiae serotype V (strain ATCC BAA-611 / 2603 V/R).